The primary structure comprises 231 residues: Large ribosomal subunit protein uL1 (231 aa).

Belongs to the universal ribosomal protein uL1 family. As to quaternary structure, part of the 50S ribosomal subunit.

In terms of biological role, binds directly to 23S rRNA. The L1 stalk is quite mobile in the ribosome, and is involved in E site tRNA release. Its function is as follows. Protein L1 is also a translational repressor protein, it controls the translation of the L11 operon by binding to its mRNA. The polypeptide is Large ribosomal subunit protein uL1 (Neisseria gonorrhoeae (strain ATCC 700825 / FA 1090)).